Here is a 742-residue protein sequence, read N- to C-terminus: MATKFPSFSQGLAQDPTTRRIWYGIATAHDFESHDGMTEEQLYQKLFSTHFGHLAIIGLWVAGNLFHIAWQGNFEQWVLDPLHTRPIAHAIWDPHFGQGLTDALTQAGATSPVNIAYSGLYHWWYTIGMRTNEQLFQGAIFINILVCWLLFAGWLHLQPKYRPSLAWFKNAESQLNHHLAVLFGFSSIAWTGHLIHVAIPESRGIHVGWENWLTVMPHPEGLTPFFSGNWGAYAQNPDSIDAVFGTSQGAGTAIFTFLGGLHPQSESLWLTDIAHHHLAIGVVFIIAGHMYRTNFGIGHSLKEIIEAHNTSHPKDPHRGYFGIKHNGLFETVNNSLHFQLGLALASLGVACSLVAQHMGALPSYAFIARDYTTQSALYTHHQYIAMFLMVGAFSHGAIFFVRDYDPELNKDNVLARILSTKEALISHLSWVTMLLGFHTLGIYVHNDVVVAFGTPEKQILIEPVFAQFAQAASGKMMYGFNALLANASSSASIAANSMPGNHYWMDMINRPDALTNFLPIGPADFLVHHAIALGLHTTALILIKGALDARGTKLIPDKKDLGFAFPCDGPGRGGTCDSSSWDATYLAMFWALNTIAWITFYWHWKHLAIWMGNTAQFNESGTYLMGWFRDYLWLNSSQLINGYNPFGVNALSPWAWMFLFGHLIWATGFMFLISWRGYWQELIETLVWAHQRTPIANLVGWRDKPVALSIVQARLVGLTHFTVGNFVTFGAFVIASTSGKFG.

8 helical membrane-spanning segments follow: residues 46-69, 135-158, 175-199, 273-291, 336-359, 375-401, 423-445, and 525-543; these read LFSTHFGHLAIIGLWVAGNLFHIA, LFQGAIFINILVCWLLFAGWLHLQ, LNHHLAVLFGFSSIAWTGHLIHVAI, IAHHHLAIGVVFIIAGHMY, LHFQLGLALASLGVACSLVAQHMG, SALYTHHQYIAMFLMVGAFSHGAIFFV, ALISHLSWVTMLLGFHTLGIYVH, and FLVHHAIALGLHTTALILI. Residues Cys567 and Cys576 each coordinate [4Fe-4S] cluster. 2 consecutive transmembrane segments (helical) span residues 583 to 604 and 651 to 673; these read ATYLAMFWALNTIAWITFYWHW and LSPWAWMFLFGHLIWATGFMFLI. Positions 662, 670, and 678 each coordinate divinyl chlorophyll a. Position 679 (Trp679) interacts with phylloquinone. The helical transmembrane segment at 715 to 735 threads the bilayer; the sequence is LVGLTHFTVGNFVTFGAFVIA.

Belongs to the PsaA/PsaB family. In terms of assembly, the PsaA/B heterodimer binds the P700 divinyl chlorophyll special pair and subsequent electron acceptors. PSI consists of a core antenna complex that captures photons, and an electron transfer chain that converts photonic excitation into a charge separation. The cyanobacterial PSI reaction center is composed of one copy each of PsaA,B,C,D,E,F,I,J,K,L,M and X, and forms trimeric complexes. The cofactor is PSI electron transfer chain: 5 divinyl chlorophyll a, 1 divinyl chlorophyll a', 2 phylloquinones and 3 4Fe-4S clusters. PSI core antenna: 90 divinyl chlorophyll a, 22 carotenoids, 3 phospholipids and 1 galactolipid. P700 is a divinyl chlorophyll a/divinyl chlorophyll a' dimer, A0 is one or more divinyl chlorophyll a, A1 is one or both phylloquinones and FX is a shared 4Fe-4S iron-sulfur center..

It is found in the cellular thylakoid membrane. It carries out the reaction reduced [plastocyanin] + hnu + oxidized [2Fe-2S]-[ferredoxin] = oxidized [plastocyanin] + reduced [2Fe-2S]-[ferredoxin]. Functionally, psaA and PsaB bind P700, the primary electron donor of photosystem I (PSI), as well as the electron acceptors A0, A1 and FX. PSI is a plastocyanin/cytochrome c6-ferredoxin oxidoreductase, converting photonic excitation into a charge separation, which transfers an electron from the donor P700 chlorophyll pair to the spectroscopically characterized acceptors A0, A1, FX, FA and FB in turn. Oxidized P700 is reduced on the lumenal side of the thylakoid membrane by plastocyanin or cytochrome c6. In Prochlorococcus marinus (strain NATL2A), this protein is Photosystem I P700 chlorophyll a apoprotein A2.